Consider the following 64-residue polypeptide: Large ribosomal subunit protein bL33c (64 aa).

This sequence belongs to the bacterial ribosomal protein bL33 family.

Its subcellular location is the plastid. It is found in the chloroplast. The sequence is that of Large ribosomal subunit protein bL33c (rpl33) from Cyanidium caldarium (Red alga).